The following is a 283-amino-acid chain: Putative Ig-like domain-containing protein ORF10 (283 aa).

A signal peptide spans 1 to 55 (MIDKRNKKAVTHISTCLCHSSIPIYGDSPFLNTHRAAMDPRPLVLLLLLASHIST). Asn75, Asn92, Asn121, Asn157, Asn179, Asn198, Asn223, and Asn229 each carry an N-linked (GlcNAc...) asparagine; by host glycan. The Ig-like domain occupies 129–227 (QPLGQSIHHA…IDQQTNLTLT (99 aa)).

The sequence is that of Putative Ig-like domain-containing protein ORF10 from Galliformes (FAdV-1).